A 1077-amino-acid polypeptide reads, in one-letter code: Receptor-type guanylate cyclase daf-11 (1077 aa).

N-linked (GlcNAc...) asparagine glycans are attached at residues Asn14, Asn112, Asn149, and Asn311. Residues 335-355 (TGVIIAIAVIMGVLLMFIIIL) form a helical membrane-spanning segment. The 341-residue stretch at 355–695 (LTTIRKCCNG…LARKIIDTVL (341 aa)) folds into the Protein kinase domain. Residues 356 to 1077 (TTIRKCCNGS…DSQASTIPDN (722 aa)) lie on the Cytoplasmic side of the membrane. The 131-residue stretch at 765-895 (TILYSDIVGF…EAVILASKME (131 aa)) folds into the Guanylate cyclase domain. Residues Asp770, Ile771, and Asp814 each coordinate Mg(2+). Positions 983 to 1034 (KDKMTLAKEKVIAERKNEEERLQRQQTLQEALEEHEEEIEMNEVLVDEDEGE) form a coiled coil. Positions 1048-1077 (TQMEELEDEPAGRTIGHGRLDSQASTIPDN) are disordered.

It belongs to the adenylyl cyclase class-4/guanylyl cyclase family. Expressed in sensory neurons including ASI, ASJ, ASK, AWB and AWC. Expressed in ASJ neurons in the dauer stage.

Its subcellular location is the cell membrane. It localises to the cell projection. It is found in the dendrite. The protein localises to the cilium. The protein resides in the perikaryon. The enzyme catalyses GTP = 3',5'-cyclic GMP + diphosphate. Functionally, guanylate cyclase involved in the production of the second messenger cGMP. In addition, regulates cGMP levels by controlling the transcription of 3',5'-cyclic phosphodiesterase pde-1 and pde-5 mRNAs. Involved in the olfactory, light and pheromone sensing pathways. Part of the chemosensory mechanism of the ASJ sensory neuron that controls dauer formation and dauer recovery. Promotes the calcium flux in ASJ sensory neurons in response to onset and removal of a nitric oxide (NO) stimulus and is thereby required for the behavioral avoidance response to NO-producing organisms like P.aeruginosa. In ASI and ASJ sensory neurons, controls dauer formation and behavioral response to P.aeruginosa by up-regulating the transcription of daf-7, a member of the TGF-beta family. Required for the chemotaxis responses to non-volatile and volatile attractants mediated by the sensory neurons ASE and AWC respectively. Required in ASJ neurons for phototransduction downstream of G protein coupled-photoreceptor lite-1. Plays a role in the development of ASJ sensory neuron axons during late larval stages and in the maintenance of normal axon morphology in adults. Required to maintain the expression of putative olfactory receptor str-2 in one of the two AWC neurons in adults. Regulates, via the production of cGMP, lifespan (in some environmental conditions), sensitivity to oxidative stress and entry into quiescence triggered by satiety. In AWB and AWC sensory neurons, mediates the recognition of food odors which subsequently allows for the detection of preferred food sources. In Caenorhabditis elegans, this protein is Receptor-type guanylate cyclase daf-11.